The sequence spans 194 residues: Thymidine kinase (194 aa).

Residues 15-22 and 88-91 each bind ATP; these read GSMFSGKS and DEVQ. The active-site Proton acceptor is glutamate 89. Residues cysteine 145, cysteine 148, cysteine 183, and cysteine 186 each coordinate Zn(2+).

The protein belongs to the thymidine kinase family. In terms of assembly, homotetramer.

The protein localises to the cytoplasm. The enzyme catalyses thymidine + ATP = dTMP + ADP + H(+). This Bacillus cereus (strain AH820) protein is Thymidine kinase.